A 567-amino-acid chain; its full sequence is Proline--tRNA ligase (567 aa).

The protein belongs to the class-II aminoacyl-tRNA synthetase family. ProS type 1 subfamily. Homodimer.

It localises to the cytoplasm. The catalysed reaction is tRNA(Pro) + L-proline + ATP = L-prolyl-tRNA(Pro) + AMP + diphosphate. Catalyzes the attachment of proline to tRNA(Pro) in a two-step reaction: proline is first activated by ATP to form Pro-AMP and then transferred to the acceptor end of tRNA(Pro). As ProRS can inadvertently accommodate and process non-cognate amino acids such as alanine and cysteine, to avoid such errors it has two additional distinct editing activities against alanine. One activity is designated as 'pretransfer' editing and involves the tRNA(Pro)-independent hydrolysis of activated Ala-AMP. The other activity is designated 'posttransfer' editing and involves deacylation of mischarged Ala-tRNA(Pro). The misacylated Cys-tRNA(Pro) is not edited by ProRS. This is Proline--tRNA ligase from Staphylococcus aureus (strain MRSA252).